Here is a 587-residue protein sequence, read N- to C-terminus: GATA zinc finger domain-containing protein 3 (587 aa).

The segment covering 53–74 has biased composition (low complexity); that stretch reads NINNNINNNNNNNNNNNNNNIN. Disordered regions lie at residues 53-141, 179-294, and 312-392; these read NINN…LKIP, QLAH…SSPS, and QTSP…ATIN. Over residues 75–86 the composition is skewed to polar residues; that stretch reads QYHQNHYDQYSD. Low complexity-rich tracts occupy residues 87-136, 183-202, 237-264, 272-292, and 316-333; these read NNCN…NNNN, NSSM…TPTS, NING…INNG, GNNN…NSSS, and SQQS…QQSQ. Composition is skewed to polar residues over residues 340–358 and 365–379; these read INTT…TNSP and NESS…TPLS. Residues 500–525 form a GATA-type zinc finger; it reads CIFCGTMETPEWRKGPGGHKTLCNAC. The segment at 536 to 587 is disordered; that stretch reads ENQNNGGSPNPQQNNVTTTTTTTTSTSTNSPNSNGNNFSPESAMSVSKLISD. Residues 538-575 are compositionally biased toward low complexity; it reads QNNGGSPNPQQNNVTTTTTTTTSTSTNSPNSNGNNFSP. The segment covering 577 to 587 has biased composition (polar residues); it reads SAMSVSKLISD.

This Dictyostelium discoideum (Social amoeba) protein is GATA zinc finger domain-containing protein 3 (gtaC).